The following is an 845-amino-acid chain: MAMAMRLPAISRAVTEVASSPVGLRRLFCSNASRFSFLSPPARRQAEPSTNLFHSGLSKRITSERSLWNRIFSRNMGGGPRTFPGGLNKWQWKRMHEKKAREKENKLLDQEKQLYEARIRTEIRAKMWGHPDSGEKTAKLKQSHGPMSPKEHIKTLADRFMKAGADDLWNDNDGPVKKFDQGSRSCSDSIDSTPIDVRRLVSATCDSMGKHRVLDSSRRGFSSMSRFKRNESSCDEGDDVDAKKLDTLSPFSPKFSGTKEKVKSSTSVVGVIRNKGLFGRRKFRKNDSSTEEDSDEEGNEGKMIGWMDLRKTGSSASLGNHDIKLTKRVNRNVTDEELYPPLDINRVREDLSKKQSVDNVMEEKQEPHDSIYSAKRFDESCISPLTLKALSASGIVKMTRVQDATLSECLDGKDALVKAKTGTGKSMAFLLPAIETVLKAMNSGKGVHKVAPIFVLILCPTRELASQIAAEGKALLKNHDGIGVQTLIGGTRFRLDQQRLESEPCQILIATPGRLLDHIENKSGLTSRLMALKLFIVDEADLLLDLGFKRDVEKIIDCLPRQRQSLLFSATIPKEVRRVSQLVLKRDHSYIDTIGLGCVETHDKVKQSCIVAPHESHFHLVPHLLKEHINNMPDYKIIVFCSTGMVTSLMYTLLREMKLNVREIHARKPQLHRTCVSDEFKESNRLILVTSDVSARGMNYPDVTLVIQVGIPSDREQYIHRLGRTGREGKGGKGLLLIAPWERYFLDELKDLPLEPIPAPDLDSRVKHQVDQSMAKIDTSIKEAAYHAWLGYYNSVRETGRDKTTLAELANRFCHSIGLEKPPALFRRTAVKMGLKGISGIPIRK.

Disordered regions lie at residues 129–149 (GHPD…PMSP) and 282–302 (KFRK…NEGK). Acidic residues predominate over residues 289-298 (STEEDSDEEG). A Q motif motif is present at residues 375-403 (KRFDESCISPLTLKALSASGIVKMTRVQD). Residues 406 to 590 (LSECLDGKDA…QLVLKRDHSY (185 aa)) form the Helicase ATP-binding domain. 419 to 426 (AKTGTGKS) is an ATP binding site. The short motif at 538 to 541 (DEAD) is the DEAD box element. In terms of domain architecture, Helicase C-terminal spans 624-778 (LLKEHINNMP…QVDQSMAKID (155 aa)).

The protein belongs to the DEAD box helicase family.

The enzyme catalyses ATP + H2O = ADP + phosphate + H(+). The protein is Putative DEAD-box ATP-dependent RNA helicase 33 (RH33) of Arabidopsis thaliana (Mouse-ear cress).